The primary structure comprises 310 residues: Olfactory receptor 5P54 (310 aa).

Over Met1–Ile25 the chain is Extracellular. The N-linked (GlcNAc...) asparagine glycan is linked to Asn5. The chain crosses the membrane as a helical span at residues Ala26–Ile46. Topologically, residues Thr47 to Gln54 are cytoplasmic. A helical membrane pass occupies residues Leu55–Thr75. Topologically, residues Leu76–Ala99 are extracellular. Cysteines 97 and 189 form a disulfide. The chain crosses the membrane as a helical span at residues Glu100–Tyr120. Residues Asp121–Ser133 are Cytoplasmic-facing. A helical membrane pass occupies residues Thr134–Met154. Residues Asn155–Gly196 lie on the Extracellular side of the membrane. A glycan (N-linked (GlcNAc...) asparagine) is linked at Asn165. The chain crosses the membrane as a helical span at residues Ile197–Phe217. Topologically, residues Tyr218–Ala237 are cytoplasmic. Residues Phe238–Ile258 traverse the membrane as a helical segment. The Extracellular segment spans residues Tyr259 to Asn271. Asn265 carries N-linked (GlcNAc...) asparagine glycosylation. A helical transmembrane segment spans residues Lys272 to Leu292. Residues Lys293 to Thr310 are Cytoplasmic-facing.

It belongs to the G-protein coupled receptor 1 family.

The protein resides in the cell membrane. In terms of biological role, potential odorant receptor. The chain is Olfactory receptor 5P54 from Mus musculus (Mouse).